We begin with the raw amino-acid sequence, 618 residues long: Probable protein disulfide-isomerase A4 (618 aa).

Residues 1–21 (MMFDRRFFALVVLLCVSAVRS) form the signal peptide. Thioredoxin domains lie at 22 to 139 (TEDA…SRVD), 138 to 254 (VDPN…DQSK), and 480 to 609 (SSGK…KHGV). Intrachain disulfides connect C65–C68, C176–C179, and C529–C532. A Prevents secretion from ER motif is present at residues 615 to 618 (KDEL).

This sequence belongs to the protein disulfide isomerase family.

The protein resides in the endoplasmic reticulum lumen. It catalyses the reaction Catalyzes the rearrangement of -S-S- bonds in proteins.. This chain is Probable protein disulfide-isomerase A4, found in Caenorhabditis elegans.